We begin with the raw amino-acid sequence, 307 residues long: Aspartate carbamoyltransferase catalytic subunit (307 aa).

Arginine 54 and threonine 55 together coordinate carbamoyl phosphate. Lysine 83 contacts L-aspartate. Carbamoyl phosphate contacts are provided by arginine 104, histidine 132, and glutamine 135. L-aspartate is bound by residues arginine 165 and arginine 228. Carbamoyl phosphate is bound by residues leucine 267 and proline 268.

It belongs to the aspartate/ornithine carbamoyltransferase superfamily. ATCase family. In terms of assembly, heterododecamer (2C3:3R2) of six catalytic PyrB chains organized as two trimers (C3), and six regulatory PyrI chains organized as three dimers (R2).

It catalyses the reaction carbamoyl phosphate + L-aspartate = N-carbamoyl-L-aspartate + phosphate + H(+). It functions in the pathway pyrimidine metabolism; UMP biosynthesis via de novo pathway; (S)-dihydroorotate from bicarbonate: step 2/3. In terms of biological role, catalyzes the condensation of carbamoyl phosphate and aspartate to form carbamoyl aspartate and inorganic phosphate, the committed step in the de novo pyrimidine nucleotide biosynthesis pathway. This is Aspartate carbamoyltransferase catalytic subunit from Clostridium perfringens (strain 13 / Type A).